Consider the following 1473-residue polypeptide: NACHT, LRR and PYD domains-containing protein 1 (1473 aa).

The 92-residue stretch at 1-92 (MAGGAWGRLA…CAQAQEGAGH (92 aa)) folds into the Pyrin domain. Residues 90–113 (AGHSPSFPYSPSEPHLGSPSQPTS) form a disordered region. Phosphoserine; by MAPK11 and MAPK14 is present on residues serine 93, serine 99, and serine 101. Phosphoserine; by MAPK14 is present on serine 107. A ZAKalpha motif 1 motif is present at residues 111 to 117 (PTSTAVL). Threonine 112 bears the Phosphothreonine; by MAPK11, MAPK14 and MAP3K20 mark. A Phosphoserine; by MAP3K20 modification is found at serine 113. A phosphothreonine; by MAP3K20 mark is found at threonine 114 and threonine 129. Serine 132 is modified (phosphoserine; by MAP3K20). Positions 160–254 (LPSSPDHESP…HTSLQPHHHP (95 aa)) are disordered. At serine 163 the chain carries Phosphoserine; by MAPK14. Serine 168 carries the post-translational modification Phosphoserine; by MAPK11 and MAPk14. Serine 170 carries the phosphoserine; by MAPK11 and MAPK14 modification. Over residues 170-182 (SQESPNAPTSTAV) the composition is skewed to polar residues. Serine 173 carries the phosphoserine; by MAPK11 modification. The short motif at 177–183 (PTSTAVL) is the ZAKalpha motif 2 element. A Phosphothreonine; by MAPK11 modification is found at threonine 178. The residue at position 179 (serine 179) is a Phosphoserine; by MAPK11 and MAP3K20. Threonine 180 bears the Phosphothreonine; by MAPK11 and MAP3K20 mark. Positions 218-231 (EIREREREKSEKGR) are enriched in basic and acidic residues. An NACHT domain is found at 328–637 (RIVILQGAAG…EFFAAMSYVL (310 aa)). Residue 334–341 (GAAGIGKS) participates in ATP binding. LRR repeat units lie at residues 809-830 (NLKE…SLCK), 838-858 (LLET…KDLA), 866-887 (TLTE…HLCQ), 895-915 (KLQR…QDLA), 923-944 (SLKE…LLCE), and 950-973 (ACKL…ELRA). The disordered stretch occupies residues 991–1017 (VMTPTEGLDTGEMSNSTSSLKRQRLGS). The segment at 1079 to 1212 (FWGPTGPVAT…HHIVLENPSF (134 aa)) is ZU5. Residues 1079 to 1364 (FWGPTGPVAT…LMPATTLIPP (286 aa)) enclose the FIIND domain. Residues 1213-1364 (SPLGVLLKMI…LMPATTLIPP (152 aa)) are UPA. In terms of domain architecture, CARD spans 1374–1463 (DAPQLLHFVD…HLIMELWEKG (90 aa)).

This sequence belongs to the NLRP family. Interacts (via LRR repeats) with BCL2 and BCL2L1 (via the loop between motifs BH4 and BH3); these interactions reduce NLRP1 inflammasome-induced CASP1 activation and IL1B release, possibly by impairing NLRP1 interaction with PYCARD. Interacts with NOD2; this interaction is enhanced in the presence of muramyl dipeptide (MDP) and increases IL1B release. Interacts with EIF2AK2/PKR; this interaction requires EIF2AK2 activity, is accompanied by EIF2AK2 autophosphorylation and promotes inflammasome assembly in response to danger-associated signals. Interacts with MEFV; this interaction targets NLRP1 to degradation by autophagy, hence preventing excessive IL1B- and IL18-mediated inflammation. Binds (via LRR domain) to dsDNA and dsRNA. Interacts with DPP9; leading to inhibit activation of the inflammasome. DPP9 acts via formation of a ternary complex, composed of a DPP9 homodimer, one full-length NLRP1 protein, and one cleaved C-terminus of NLRP1 (NACHT, LRR and PYD domains-containing protein 1, C-terminus). Interacts with DPP8; leading to inhibit activation of the inflammasome, probably via formation of a ternary complex with DPP8. As to quaternary structure, interacts with the C-terminal part of NLRP1 (NACHT, LRR and PYD domains-containing protein 1, C-terminus) in absence of pathogens and other damage-associated signals. In terms of assembly, interacts with the N-terminal part of NLRP1 (NACHT, LRR and PYD domains-containing protein 1, N-terminus) in absence of pathogens and other damage-associated signals. Homomultimer; forms the NLRP1 inflammasome polymeric complex, a filament composed of homopolymers of this form in response to pathogens and other damage-associated signals. The NLRP1 inflammasome polymeric complex associates with PYCARD/ASC. Interacts (via CARD domain) with PYCARD/ASC (via CARD domain); leading to pro-caspase-1 (proCASP1) recruitment. Pro-caspase-1 (proCASP1) filament formation increases local enzyme concentration, resulting in trans-autocleavage and activation. Active CASP1 then processes IL1B and IL18 precursors, leading to the release of mature cytokines in the extracellular milieu and inflammatory response. (Microbial infection) Interacts with vaccinia virus protein F1. As to quaternary structure, (Microbial infection) Interacts with human herpes virus 8/HHV-8 proteins ORF45; relieving autoinhibition of the NLRP1 inflammasome. Post-translationally, autocatalytically cleaved. Autocatalytic cleavage in FIIND region occurs constitutively, prior to activation signals, and is required for inflammasome activity (IL1B release), possibly by facilitating CASP1 binding. Both N- and C-terminal parts remain associated non-covalently. Ubiquitinated by the cullin:ZER1/ZYG11B complex in response to pathogen-associated signals, leading to its degradation by the proteasome and subsequent release of the cleaved C-terminal part of the protein (NACHT, LRR and PYD domains-containing protein 1, C-terminus), which polymerizes and forms the NLRP1 inflammasome. In terms of processing, phosphorylated by MAP3K20 isoform ZAKalpha, MAPK11 and MAPK14 in response to UV-B irradiation and ribosome collisions, promoting activation of the NLRP1 inflammasome and pyroptosis. Post-translationally, (Microbial infection) Cleaved between Gln-130 and Gly-131 by the Protease 3C from various human enteroviruses and rhinoviruses (EV68, EV71, Coxsackievirus B3, HRV-14 and HRV-16). This cleavage triggers N-glycine-mediated proteasomal degradation of the autoinhibitory NLRP1 N-terminal fragment via the cullin:ZER1/ZYG11B complex which liberates the activating C-terminal fragment and activates NLRP1 inflammasome. (Microbial infection) Cleaved between Gln-333 and Gly-334 by the 3C-like proteinase nsp5 from human coronavirus SARS-CoV-2. This cleavage liberates the activating C-terminal fragment and activates NLRP1 inflammasome, leading to downstream activation of GSDME and lung epithelial cell death. In terms of tissue distribution, widely expressed. Abundantly expressed in primary immune cells (isoform 1 and isoform 2), including in neutrophils, monocytes/macrophages, dendritic cells (mostly Langerhans cells), and B- and T-lymphocytes (at protein level). Strongly expressed in epithelial cells lining the glandular epithelium, such as that of the gastrointestinal tract (stomach, small intestine, colon), the respiratory tract (trachea and bronchi), and the endometrial and endocervical glands, gallbladder, prostate, and breast (at protein level). In testis, expressed in spermatogonia and primary spermatocytes, but not in Sertoli cells (at protein level). In the brain, expressed in neurons, in particular in pyramidal ones and in oligodendrocytes, but not detected in microglia (at protein level). Expressed in adult and fetal ocular tissues, including in adult and 24-week old fetal choroid, sclera, cornea, and optic nerve, as well as in adult retina and fetal retina/retinal pigment epithelium. Highly expressed in the skin throughout the epidermis and in dermal fibroblasts, in both glabrous skin and plantar skin. It is detected in keratinocytes, but not in melanocytes. Expressed in epidermal appendages such as hair follicles.

It localises to the cytoplasm. Its subcellular location is the cytosol. The protein resides in the nucleus. The protein localises to the inflammasome. It carries out the reaction ATP + H2O = ADP + phosphate + H(+). With respect to regulation, NLRP1 inflammasome is activated by cleavage by the Protease 3C from various human enteroviruses and rhinoviruses (EV68, EV71, Coxsackievirus B3, HRV-14 and HRV-16): cleavage promotes ubiquitination and degradation of the N-terminal part, releasing the cleaved C-terminal part of the protein (NACHT, LRR and PYD domains-containing protein 1, C-terminus), which polymerizes and forms the NLRP1 inflammasome. Activated double-stranded RNA: positive-strand RNA viruses such as Semliki forest virus and long dsRNA activate the NLRP1 inflammasome. In contrast to its mouse ortholog, not activated by Bacillus anthracis lethal toxin. NLRP1 inflammasome is inhibited by DPP8 and DPP9, which sequester the C-terminal fragment of NLRP1 (NACHT, LRR and PYD domains-containing protein 1, C-terminus) in a ternary complex, thereby preventing NLRP1 oligomerization and activation. NLRP1 inflammasome is activated by Val-boroPro (Talabostat, PT-100), an inhibitor of dipeptidyl peptidases DPP8 and DPP9. Val-boroPro relieves inhibition of DPP8 and/or DPP9 by promoting disruption of the ternary complex, releasing its C-terminal part from autoinhibition. ATPase activity is activated by dsRNA-binding but not dsDNA-binding. (Microbial infection) The NLRP1 inflammasome is activated by human herpes virus 8/HHV-8 protein ORF45, which interacts with the N-terminal part of NLRP1 and promotes its translocation into the nucleus, relieving autoinhibition and leading to activation. Its activity is regulated as follows. (Microbial infection) NLRP1 inflammasome is activated by cleavage by the 3C-like proteinase nsp5 from human coronavirus SARS-CoV-2. Its function is as follows. Acts as the sensor component of the NLRP1 inflammasome, which mediates inflammasome activation in response to various pathogen-associated signals, leading to subsequent pyroptosis. Inflammasomes are supramolecular complexes that assemble in the cytosol in response to pathogens and other damage-associated signals and play critical roles in innate immunity and inflammation. Acts as a recognition receptor (PRR): recognizes specific pathogens and other damage-associated signals, such as cleavage by some human enteroviruses and rhinoviruses, double-stranded RNA, UV-B irradiation, or Val-boroPro inhibitor, and mediates the formation of the inflammasome polymeric complex composed of NLRP1, CASP1 and PYCARD/ASC. In response to pathogen-associated signals, the N-terminal part of NLRP1 is degraded by the proteasome, releasing the cleaved C-terminal part of the protein (NACHT, LRR and PYD domains-containing protein 1, C-terminus), which polymerizes and associates with PYCARD/ASC to initiate the formation of the inflammasome complex: the NLRP1 inflammasome recruits pro-caspase-1 (proCASP1) and promotes caspase-1 (CASP1) activation, which subsequently cleaves and activates inflammatory cytokines IL1B and IL18 and gasdermin-D (GSDMD), leading to pyroptosis. In the absence of GSDMD expression, the NLRP1 inflammasome is able to recruit and activate CASP8, leading to activation of gasdermin-E (GSDME). Activation of NLRP1 inflammasome is also required for HMGB1 secretion; the active cytokines and HMGB1 stimulate inflammatory responses. Binds ATP and shows ATPase activity. Plays an important role in antiviral immunity and inflammation in the human airway epithelium. Specifically recognizes a number of pathogen-associated signals: upon infection by human rhinoviruses 14 and 16 (HRV-14 and HRV-16), NLRP1 is cleaved and activated which triggers NLRP1-dependent inflammasome activation and IL18 secretion. Positive-strand RNA viruses, such as Semliki forest virus and long dsRNA activate the NLRP1 inflammasome, triggering IL1B release in a NLRP1-dependent fashion. Acts as a direct sensor for long dsRNA and thus RNA virus infection. May also be activated by muramyl dipeptide (MDP), a fragment of bacterial peptidoglycan, in a NOD2-dependent manner. The NLRP1 inflammasome is also activated in response to UV-B irradiation causing ribosome collisions: ribosome collisions cause phosphorylation and activation of NLRP1 in a MAP3K20-dependent manner, leading to pyroptosis. Constitutes the precursor of the NLRP1 inflammasome, which mediates autoproteolytic processing within the FIIND domain to generate the N-terminal and C-terminal parts, which are associated non-covalently in absence of pathogens and other damage-associated signals. In terms of biological role, regulatory part that prevents formation of the NLRP1 inflammasome: in absence of pathogens and other damage-associated signals, interacts with the C-terminal part of NLRP1 (NACHT, LRR and PYD domains-containing protein 1, C-terminus), preventing activation of the NLRP1 inflammasome. In response to pathogen-associated signals, this part is ubiquitinated and degraded by the proteasome, releasing the cleaved C-terminal part of the protein, which polymerizes and forms the NLRP1 inflammasome. Functionally, constitutes the active part of the NLRP1 inflammasome. In absence of pathogens and other damage-associated signals, interacts with the N-terminal part of NLRP1 (NACHT, LRR and PYD domains-containing protein 1, N-terminus), preventing activation of the NLRP1 inflammasome. In response to pathogen-associated signals, the N-terminal part of NLRP1 is degraded by the proteasome, releasing this form, which polymerizes and associates with PYCARD/ASC to form of the NLRP1 inflammasome complex: the NLRP1 inflammasome complex then directly recruits pro-caspase-1 (proCASP1) and promotes caspase-1 (CASP1) activation, leading to gasdermin-D (GSDMD) cleavage and subsequent pyroptosis. Its function is as follows. It is unclear whether is involved in inflammasome formation. It is not cleaved within the FIIND domain, does not assemble into specks, nor promote IL1B release. However, in an vitro cell-free system, it has been shown to be activated by MDP. In Homo sapiens (Human), this protein is NACHT, LRR and PYD domains-containing protein 1.